A 496-amino-acid chain; its full sequence is Lysine--tRNA ligase (496 aa).

Mg(2+) contacts are provided by E409 and E416.

Belongs to the class-II aminoacyl-tRNA synthetase family. In terms of assembly, homodimer. Requires Mg(2+) as cofactor.

Its subcellular location is the cytoplasm. It catalyses the reaction tRNA(Lys) + L-lysine + ATP = L-lysyl-tRNA(Lys) + AMP + diphosphate. The protein is Lysine--tRNA ligase of Streptococcus pneumoniae (strain Hungary19A-6).